The sequence spans 121 residues: C-X-C motif chemokine 11-6 (121 aa).

Positions 1–20 (MKTLAAFLLLSCLIAGEVNG) are cleaved as a signal peptide. Cystine bridges form between Cys29/Cys56 and Cys31/Cys73. The interval 95–121 (QSVPHSTTTGTVKSSMTSSTSAPTAFK) is disordered. A compositionally biased stretch (low complexity) spans 100-115 (STTTGTVKSSMTSSTS).

This sequence belongs to the intercrine alpha (chemokine CxC) family.

The protein localises to the secreted. Ligand for cxcr3.2. Chemotactic for macrophages. This Danio rerio (Zebrafish) protein is C-X-C motif chemokine 11-6.